The following is a 559-amino-acid chain: Leucine-rich repeat protein soc-2 (559 aa).

Residues 1–17 are compositionally biased toward basic and acidic residues; it reads METSKEFEFRPAKETSR. The disordered stretch occupies residues 1 to 55; sequence METSKEFEFRPAKETSRSKSPGGIVGRLSNFARNKARHSLSEKGSNSVGGSGGAG. LRR repeat units lie at residues 74–95, 97–118, 120–142, 143–164, 166–187, 189–210, 212–233, 235–256, 258–279, 281–302, 305–326, 329–350, 353–374, 376–397, 399–420, 422–443, 445–466, 468–489, 491–513, and 515–536; these read QDQR…IKEL, QLTE…IGQL, NLKK…ASLE, SLET…IYKI, SLET…IGNL, KLKM…IGKL, SLVV…IGDC, SLTQ…IGKL, NLVR…LESC, QLEE…LLTM, KIHT…GPQQ, STVT…IFSK, RLTK…MGSW, SITE…IEKL, NLEI…IGNL, KLRE…IGFL, HLTK…IGNL, SLQD…IGHL, SLKS…LALC, and SLEI…ITAG.

It belongs to the SHOC2 family. In terms of assembly, interacts with let-60.

Acts as a Ras effector and participates in MAPK pathway activation. Probably acts as a scaffolding protein in a protein phosphatase complex that specifically dephosphorylates Raf kinase and stimulates Raf activity at specialized signaling complexes upon Ras activation. Required for vulval development. Involved in fluid homeostasis. Plays a role in nicotinic acetylcholine receptor (nAChR)-mediated sensitivity to nicotine. The sequence is that of Leucine-rich repeat protein soc-2 (soc-2) from Caenorhabditis elegans.